The primary structure comprises 77 residues: Sec-independent protein translocase protein TatA (77 aa).

Residues 1–21 (MGSFSIWHWLIVLVIVMLVFG) traverse the membrane as a helical segment. Positions 46 to 77 (GEGKAAADPAQSKELRDSTTIDVEAKEKTRQQ) are disordered.

It belongs to the TatA/E family. As to quaternary structure, the Tat system comprises two distinct complexes: a TatABC complex, containing multiple copies of TatA, TatB and TatC subunits, and a separate TatA complex, containing only TatA subunits. Substrates initially bind to the TatABC complex, which probably triggers association of the separate TatA complex to form the active translocon.

It is found in the cell inner membrane. Part of the twin-arginine translocation (Tat) system that transports large folded proteins containing a characteristic twin-arginine motif in their signal peptide across membranes. TatA could form the protein-conducting channel of the Tat system. The sequence is that of Sec-independent protein translocase protein TatA from Cupriavidus necator (strain ATCC 17699 / DSM 428 / KCTC 22496 / NCIMB 10442 / H16 / Stanier 337) (Ralstonia eutropha).